Consider the following 288-residue polypeptide: T-lymphocyte activation antigen CD80 (288 aa).

The first 34 residues, 1-34 (MGHTRRQGTSPSKCPYLNFFQLLVLAGLSHFCSG), serve as a signal peptide directing secretion. Residues 35 to 135 (VIHVTKEVKE…FKREHLAEVT (101 aa)) enclose the Ig-like V-type domain. Topologically, residues 35–242 (VIHVTKEVKE…TTKQEHFPDN (208 aa)) are extracellular. 2 disulfides stabilise this stretch: cysteine 50-cysteine 116 and cysteine 162-cysteine 216. N-linked (GlcNAc...) asparagine glycans are attached at residues asparagine 53, asparagine 89, asparagine 98, asparagine 186, asparagine 207, asparagine 211, asparagine 226, and asparagine 232. One can recognise an Ig-like C2-type domain in the interval 145–230 (PSISDFEIPT…GHLRVNQTFN (86 aa)). A helical membrane pass occupies residues 243 to 263 (LLPSWAITLISVNGIFVICCL). S-palmitoyl cysteine attachment occurs at residues cysteine 261, cysteine 262, cysteine 266, and cysteine 271. Topologically, residues 264 to 288 (TYCFAPRCRERRRNERLRRESVRPV) are cytoplasmic. The residue at position 284 (serine 284) is a Phosphoserine.

As to quaternary structure, homodimer. Interacts with CTLA4; this interaction inhibits T-cell activation. Interacts with PDL1/CD274; this interaction blocks PDL1/PDCD1 binding and thus PDL1/CD274 inhibitory function. Interacts with CD28. In terms of assembly, (Microbial infection) Interacts with adenovirus subgroup B fiber proteins. (Microbial infection) Interacts with Orthopoxvirus OPG038/M2 protein, inhibiting the interaction with CTLA4/CD152. In terms of processing, palmitoylated by ZDHHC20; palmitoylation protects CD80 from ubiquitin-mediated degradation, regulating the protein stability, and ensures its accurate plasma membrane localization. Expressed on activated B-cells, macrophages and dendritic cells.

It is found in the cell membrane. Its function is as follows. Costimulatory molecule that belongs to the immunoglobulin superfamily that plays an important role in T-lymphocyte activation. Acts as the primary auxiliary signal augmenting the MHC/TCR signal in naive T-cells together with the CD28 receptor which is constitutively expressed on the cell surface of T-cells. In turn, activates different signaling pathways such as NF-kappa-B or MAPK leading to the production of different cytokines. In addition, CD28/CD80 costimulatory signal stimulates glucose metabolism and ATP synthesis of T-cells by activating the PI3K/Akt signaling pathway. Also acts as a regulator of PDL1/PDCD1 interactions to limit excess engagement of PDL1 and its inhibitory role in immune responses. Expressed on B-cells, plays a critical role in regulating interactions between B-cells and T-cells in both early and late germinal center responses, which are crucial for the generation of effective humoral immune responses. (Microbial infection) Acts as a receptor for adenovirus subgroup B. The protein is T-lymphocyte activation antigen CD80 (CD80) of Homo sapiens (Human).